A 553-amino-acid polypeptide reads, in one-letter code: Glycerol kinase 2 (553 aa).

Substrate is bound at residue threonine 20. Arginine 24 provides a ligand contact to ATP. 3 residues coordinate substrate: arginine 94, tyrosine 148, and aspartate 259. ATP is bound by residues threonine 281, glycine 326, and 427–431 (GMTNN). Residues 526-546 (IFSSMPLGFFIVSSMVMLIGA) traverse the membrane as a helical segment.

Belongs to the FGGY kinase family. In terms of assembly, interacts with ARMC12 and PLD6.

Its subcellular location is the mitochondrion outer membrane. The protein resides in the cytoplasm. The enzyme catalyses glycerol + ATP = sn-glycerol 3-phosphate + ADP + H(+). It participates in polyol metabolism; glycerol degradation via glycerol kinase pathway; sn-glycerol 3-phosphate from glycerol: step 1/1. In terms of biological role, key enzyme in the regulation of glycerol uptake and metabolism. Essential for male fertility and sperm mitochondrial sheath formation. Required for proper arrangement of crescent-like mitochondria to form the mitochondrial sheath during spermatogenesis. Can induce mitochondrial clustering through interactions with PLD6 and up-regulation of phosphatidic acid synthesis in the mitochondria. This chain is Glycerol kinase 2 (GK2), found in Macaca fascicularis (Crab-eating macaque).